Consider the following 223-residue polypeptide: Large ribosomal subunit protein uL3 (223 aa).

The protein belongs to the universal ribosomal protein uL3 family. As to quaternary structure, part of the 50S ribosomal subunit. Forms a cluster with proteins L14 and L19.

In terms of biological role, one of the primary rRNA binding proteins, it binds directly near the 3'-end of the 23S rRNA, where it nucleates assembly of the 50S subunit. The polypeptide is Large ribosomal subunit protein uL3 (Nocardioides sp. (strain ATCC BAA-499 / JS614)).